Consider the following 376-residue polypeptide: WD repeat-containing protein wdr-5.1 (376 aa).

A compositionally biased stretch (polar residues) spans 1 to 24; the sequence is MDTSENAASAAEQQPTQQIDQLTV. The tract at residues 1-70 is disordered; that stretch reads MDTSENAASA…TPNPNAAGAS (70 aa). Low complexity predominate over residues 25–53; it reads PNAPDGGSSAPAPSTSPNSISPSNPTGTP. WD repeat units lie at residues 85-115, 127-157, 169-199, 211-241, 254-284, 296-329, and 341-373; these read GHTKSISSAKFSPCGKYLGTSSADKTVKIWN, GHKLGVNDIAWSSDSRCVVSASDDKTLKIFE, GHNNYVFCCNFNPQSSLVVSGSFDESVRIWD, AHSDPVSAVSFNRDGSLIASGSYDGLVRIWD, DENPPVAFVKFSPNGKYILASNLDSTLKLWD, GHENSKYCIFANFSVTGGKWIISGSEDCKIYIWN, and GHTQPVLASDCHPVQNIIASGALEPDNKIHIWR.

The protein belongs to the WD repeat WDR5/wds family. In terms of assembly, component of the SET2 complex (also known as the SET1/COMPASS complex), which contains at least set-2, swd-2.1, cfp-1, rbbp-5, wdr-5.1, dpy-30 and ash-2. Within the complex, interacts with cfp-1, ash-2, dpy-30 and hda-1. Interacts with histone H3 both unmethylated and methylated at 'Lys-4'. Interacts with jmjd-3.1, ceh-6, sox-2, sem-4 and egl-27. Interacts with set-2. Enriched in the germline. Detected in all nuclei of the embryo. In larvae, expression is detected in the nuclei of seam cells, somatic gonad precursor cells Z1 and Z4, vulval precursor cells, distal tip cells, hypodermal cells, intestinal and muscle cells. Also detected in the neurons from the ventral nerve cord, head and tail region. Expressed in the head and tail region, intestinal cells, muscle cells, cells of the vulva, spermatheca and sheath cells in adults.

The protein localises to the nucleus. Functionally, contributes to histone modification. May position the N-terminus of histone H3 for efficient trimethylation at 'Lys-4'. Required for di- and trimethylation, particularly for the trimethylation at 'Lys-4' of histone H3. Not required for demethylation of histone H3 'Lys-27'. H3 'Lys-4' methylation represents a specific tag for epigenetic transcriptional activation, germline establishment, maintenance and function. Implicated in the epigenetic inheritance of lifespan over several generations. Acts in the germline to limit the longevity of the soma, probably by regulating a lipid metabolism pathway that signals from the germline to the intestine, thereby preventing accumulation of mono-unsaturated fatty acids. Required for RNA interference with probable antagonistic role against hpl-2 function. Plays a role in vulval cell fate specification by acting in the synthetic multivulva pathway independent of set-2. Sex determining protein required in the germline to promote the spermatogenesis to oogenesis switch during the late larval stages of development. Acts with the sex determining factor tra-1, and redundantly with wdr-5.2, to regulate fog-3 expression, which in turn determines germ cell fate. Cooperates with jmjd-3.1, egl-27 and unc-3 to ensure robust transdifferentiation of the Y rectal cell to the PDA motor neuron during larval development. This Caenorhabditis elegans protein is WD repeat-containing protein wdr-5.1 (wdr-5.1).